The chain runs to 442 residues: Glycoprotein endo-alpha-1,2-mannosidase-like protein (442 aa).

At 1–8 the chain is on the cytoplasmic side; it reads MNRLRRKA. A helical; Signal-anchor for type II membrane protein membrane pass occupies residues 9 to 29; that stretch reads CVALLLFTLFIFGTMMGLRTL. The Lumenal segment spans residues 30 to 442; sequence KPTDGFSDLA…FSKEKEQWLM (413 aa).

This sequence belongs to the glycosyl hydrolase 99 family.

It is found in the golgi apparatus membrane. This chain is Glycoprotein endo-alpha-1,2-mannosidase-like protein (maneal), found in Danio rerio (Zebrafish).